Consider the following 447-residue polypeptide: Secretin receptor (447 aa).

Residues 1–28 form the signal peptide; that stretch reads MLSTMSPRLSLLLLWLLLLINAAHPVGA. Over 29-140 the chain is Extracellular; sequence LPRLCDVRRV…NERRHAYLLK (112 aa). Disulfide bonds link cysteine 46–cysteine 74, cysteine 65–cysteine 106, and cysteine 88–cysteine 122. N-linked (GlcNAc...) asparagine glycans are attached at residues asparagine 71, asparagine 99, asparagine 105, and asparagine 127. Residues 141–166 form a helical membrane-spanning segment; the sequence is LKVMYTVGYSSSLAMLLVALSILCSF. At 167-173 the chain is on the cytoplasmic side; it reads RRLHCTR. A helical transmembrane segment spans residues 174–194; it reads NYIHMHLFVSFILRALSNFIK. Residues 195–215 are Extracellular-facing; that stretch reads DAVLFPADDVTYCDAHRAGCK. Cysteine 214 and cysteine 284 are disulfide-bonded. Residues 216 to 238 form a helical membrane-spanning segment; sequence LVMIFFQYCIMANYAWLLVEGLY. Residues 239–253 lie on the Cytoplasmic side of the membrane; that stretch reads LHTLLAISFFSERKC. Residues 254–275 form a helical membrane-spanning segment; sequence LQAFVLFGWGSPAIFVALWAVT. Topologically, residues 276-290 are extracellular; it reads RHFLEDFGCWDINSN. Asparagine 290 is a glycosylation site (N-linked (GlcNAc...) asparagine). A helical transmembrane segment spans residues 291 to 314; it reads ASIWWVIRGPVILSIVINFIFFIN. Residues 315-339 are Cytoplasmic-facing; that stretch reads ILRILMRKLRTQETRGNETHHYKRL. The chain crosses the membrane as a helical span at residues 340–355; that stretch reads AKSTLLLIPLFGIHYI. At 356–366 the chain is on the extracellular side; it reads VFAFSPEGAME. Residues 367-390 form a helical membrane-spanning segment; the sequence is VQLFFELALGSFQGLVVAVLYCFL. Topologically, residues 391 to 447 are cytoplasmic; that stretch reads NGELEVQKKWRQWHLQEFPLRPVALSNSFSNATNGPTHSTKAGTSEQSRSIPGANVI. Polar residues predominate over residues 423-440; the sequence is TNGPTHSTKAGTSEQSRS. Residues 423 to 447 are disordered; the sequence is TNGPTHSTKAGTSEQSRSIPGANVI.

The protein belongs to the G-protein coupled receptor 2 family. Phosphorylated on Ser and Thr residues at the cytoplasmic C-terminus by G protein-coupled receptor kinases (GRKs). As to expression, in brain, expressed in the hippocampal CA1 region, the lower layer of cerebral cortex, the anterior olfactory nuclei, the anterior ventrolateral thalamus, the lateral region of hypothalamus, substantia nigra, tegmental area and central nucleus of the inferior colliculus, the ventral supramamillary nucleus and the cerebellum. Expressed in brown adipocytes: expression predominates in mature brown adipocytes (at protein level). Detected in the renal medulla, where it localized predominantly on the basolateral membranes of cells in the collecting ducts (blue arrow) and the ascending thick segments of the loop of Henle.

The protein resides in the cell membrane. Its subcellular location is the basolateral cell membrane. In terms of biological role, g protein-coupled receptor activated by secretin (SCT), which is involved in different processes such as regulation of the pH of the duodenal content, food intake and water homeostasis. Ligand binding causes a conformation change that triggers signaling via guanine nucleotide-binding proteins (G proteins) and activates cAMP-dependent pathway. Upon binding to secretin, regulates the pH of the duodenum by (1) inhibiting the secretion of gastric acid from the parietal cells of the stomach and (2) stimulating the production of bicarbonate (NaHCO(3)) from the ductal cells of the pancreas. In addition to regulating the pH of the duodenal content, plays a central role in diet induced thermogenesis: acts as a non-sympathetic brown fat (BAT) activator mediating prandial thermogenesis, which consequentially induces satiation. Mechanistically, secretin released by the gut after a meal binds to secretin receptor (SCTR) in brown adipocytes, activating brown fat thermogenesis by stimulating lipolysis, which is sensed in the brain and promotes satiation. Also able to stimulate lipolysis in white adipocytes. Also plays an important role in cellular osmoregulation by regulating renal water reabsorption. Also plays a role in the central nervous system: required for synaptic plasticity. This chain is Secretin receptor, found in Mus musculus (Mouse).